The primary structure comprises 396 residues: MALKTIDALDLAGKRVFIRVDFNVPLDEQRRVTDDARIRAALPTIKHAIQARAKVILGSHLGRPKGKPDDREKFSLEPAAQRLSELLKQDVILADDCIGDGVKKLVRDLKEGQVLLLENLRFHPQEEKNDEGFARELATLCDVWVNDAFGTAHRAHASTAGMAAFVKEKAAGFLIQKEVEYLGKALGSPERPFVALIGGAKVSDKIKVLENLIAKADAICIGGAMAYTFLKAQGVAVGKSLVEEDKLELARQILERAQARKVDLLLPVDHVCGAEPKDTAERVVVNDRAIPDGLMGLDIGPKTLDRYRQRIVDAKTVFWNGPMGLFEQKPWAEGTFGVAQAMAQSPAVTVVGGGDSAAAVEEAGLVSKMKHVSTGGGASLEFIEGRVLPGIQVLEG.

Substrate is bound by residues D21–N23, R37, H60–R63, R121, and R154. ATP is bound by residues K205, G296, E327, and G353–S356.

The protein belongs to the phosphoglycerate kinase family. In terms of assembly, monomer.

Its subcellular location is the cytoplasm. The catalysed reaction is (2R)-3-phosphoglycerate + ATP = (2R)-3-phospho-glyceroyl phosphate + ADP. The protein operates within carbohydrate degradation; glycolysis; pyruvate from D-glyceraldehyde 3-phosphate: step 2/5. The chain is Phosphoglycerate kinase from Anaeromyxobacter sp. (strain Fw109-5).